The primary structure comprises 271 residues: 3-methyl-2-oxobutanoate hydroxymethyltransferase 2 (271 aa).

Mg(2+)-binding residues include Asp-53 and Asp-92. 3-methyl-2-oxobutanoate-binding positions include 53–54 (DS), Asp-92, and Lys-120. Position 122 (Glu-122) interacts with Mg(2+). Residue Glu-189 is the Proton acceptor of the active site.

It belongs to the PanB family. In terms of assembly, homodecamer; pentamer of dimers. Mg(2+) is required as a cofactor.

It is found in the cytoplasm. It carries out the reaction 3-methyl-2-oxobutanoate + (6R)-5,10-methylene-5,6,7,8-tetrahydrofolate + H2O = 2-dehydropantoate + (6S)-5,6,7,8-tetrahydrofolate. It functions in the pathway cofactor biosynthesis; (R)-pantothenate biosynthesis; (R)-pantoate from 3-methyl-2-oxobutanoate: step 1/2. Its function is as follows. Catalyzes the reversible reaction in which hydroxymethyl group from 5,10-methylenetetrahydrofolate is transferred onto alpha-ketoisovalerate to form ketopantoate. The polypeptide is 3-methyl-2-oxobutanoate hydroxymethyltransferase 2 (Burkholderia lata (strain ATCC 17760 / DSM 23089 / LMG 22485 / NCIMB 9086 / R18194 / 383)).